The sequence spans 247 residues: NifU-like scaffold protein (247 aa).

This sequence belongs to the NifU family. As to quaternary structure, homodimer.

It localises to the plastid. Its subcellular location is the apicoplast. It participates in cofactor biosynthesis; iron-sulfur cluster biosynthesis. In terms of biological role, binds and transfers [4Fe-4S] iron-sulfur clusters to target proteins. The sequence is that of NifU-like scaffold protein from Plasmodium falciparum (isolate 3D7).